The chain runs to 236 residues: Kinetochore protein Spc25 (236 aa).

Residues 44-106 (KNIISAKEAI…DMEAQLLRHT (63 aa)) adopt a coiled-coil conformation. Positions 194 to 217 (EVAGASPVTPSGSERPKATSKHSN) are disordered.

This sequence belongs to the SPC25 family. Component of the Ndc80 complex, which is composed of Ndc80, Nuf2 and Spc25.

Its subcellular location is the nucleus. It localises to the chromosome. It is found in the centromere. The protein localises to the kinetochore. Acts as a component of the essential kinetochore-associated Ndc80 complex, which is required for chromosome segregation and spindle checkpoint activity during meiosis and mitosis. Required for kinetochore integrity and the organization of stable microtubule binding sites in the outer plate of the kinetochore. Participates in SAC signaling that responds specifically to disruptions in spindle microtubule dynamics. The NDC80 complex synergistically enhances the affinity of the SKA1 complex for microtubules and may allow the NDC80 complex to track depolymerizing microtubules. This is Kinetochore protein Spc25 from Drosophila persimilis (Fruit fly).